The primary structure comprises 371 residues: Riboflavin biosynthesis protein RibD (371 aa).

The interval 1–150 is deaminase; the sequence is MEVSSEQQLF…QPYLHQRETG (150 aa). One can recognise a CMP/dCMP-type deaminase domain in the interval 6–128; the sequence is EQQLFFMREA…RLKEAGISVY (123 aa). Position 55 (histidine 55) interacts with Zn(2+). Glutamate 57 acts as the Proton donor in catalysis. Zn(2+)-binding residues include cysteine 80 and cysteine 89. Residues 151–371 are reductase; sequence LPWVVMKTAA…CFECVGREDG (221 aa). Alanine 159 lines the NADP(+) pocket. Substrate is bound at residue serine 173. Residue tryptophan 175 coordinates NADP(+). Arginine 189 provides a ligand contact to substrate. NADP(+) contacts are provided by threonine 201 and aspartate 205. Residues leucine 209 and arginine 212 each coordinate substrate. Residue serine 230 coordinates NADP(+). Glutamate 299 serves as a coordination point for substrate. 301-307 serves as a coordination point for NADP(+); it reads GARLHSA.

The protein in the N-terminal section; belongs to the cytidine and deoxycytidylate deaminase family. This sequence in the C-terminal section; belongs to the HTP reductase family. Requires Zn(2+) as cofactor.

It catalyses the reaction 2,5-diamino-6-hydroxy-4-(5-phosphoribosylamino)-pyrimidine + H2O + H(+) = 5-amino-6-(5-phospho-D-ribosylamino)uracil + NH4(+). The enzyme catalyses 5-amino-6-(5-phospho-D-ribitylamino)uracil + NADP(+) = 5-amino-6-(5-phospho-D-ribosylamino)uracil + NADPH + H(+). Its pathway is cofactor biosynthesis; riboflavin biosynthesis; 5-amino-6-(D-ribitylamino)uracil from GTP: step 2/4. The protein operates within cofactor biosynthesis; riboflavin biosynthesis; 5-amino-6-(D-ribitylamino)uracil from GTP: step 3/4. In terms of biological role, converts 2,5-diamino-6-(ribosylamino)-4(3h)-pyrimidinone 5'-phosphate into 5-amino-6-(ribosylamino)-2,4(1h,3h)-pyrimidinedione 5'-phosphate. This is Riboflavin biosynthesis protein RibD (ribD) from Chlamydia muridarum (strain MoPn / Nigg).